The primary structure comprises 378 residues: Putative gustatory receptor 22f (378 aa).

At 1-13 (MKMFQPRRGFSCH) the chain is on the cytoplasmic side. A helical transmembrane segment spans residues 14–34 (LAWFMLQTTLYASWLLGLFPF). The Extracellular portion of the chain corresponds to 35 to 48 (TFDSRRKQLKRSRW). A helical membrane pass occupies residues 49–69 (LLLYGFVLHSLAMCLAMSSHL). Topologically, residues 70–88 (ASKQRRKYNAFERNPLLEK) are cytoplasmic. Residues 89-109 (IYMQFQVTTFFTISVLLLMNV) traverse the membrane as a helical segment. Residues 110 to 143 (WKSNTVRKIANELLTLEGQVKDLLTLKNCPNFNC) are Extracellular-facing. A helical membrane pass occupies residues 144–164 (FVIKKHVAAIGQFVISIYFCL). Over 165–178 (CQENSYPKILKILC) the chain is Cytoplasmic. Residues 179–199 (CLPSVGLQLIIMHFHTEIILV) traverse the membrane as a helical segment. Residues 200-245 (YRYVWLVNETLEDSHHLSSSRIHALASLYDRLLKLSELVVACNDLQ) are Extracellular-facing. N207 carries an N-linked (GlcNAc...) asparagine glycan. The helical transmembrane segment at 246 to 266 (LILMLIIYLIGNTVQIFFLIV) threads the bilayer. Topologically, residues 267-354 (LGVSMNKRYI…LCGLFSINHN (88 aa)) are cytoplasmic. Residues 355-375 (MGFQMIITSFLYLVYLLQFDF) form a helical membrane-spanning segment. The Extracellular segment spans residues 376-378 (MNL).

Belongs to the insect chemoreceptor superfamily. Gustatory receptor (GR) family. Gr22e subfamily. Taste bristles in the foreleg and labial palps.

Its subcellular location is the cell membrane. Probable gustatory receptor which mediates acceptance or avoidance behavior, depending on its substrates. The chain is Putative gustatory receptor 22f (Gr22f) from Drosophila melanogaster (Fruit fly).